A 156-amino-acid chain; its full sequence is Sperm acrosome-associated protein 5 (156 aa).

Positions 1–18 (MQVSGTIVVILMAANVEA) are cleaved as a signal peptide. The C-type lysozyme domain maps to 19-147 (KIYERCDLAK…SEWLRGCHMN (129 aa)). Intrachain disulfides connect Cys24-Cys144, Cys48-Cys132, Cys82-Cys97, and Cys93-Cys111. Residue Glu53 is part of the active site.

It belongs to the glycosyl hydrolase 22 family.

It is found in the secreted. The enzyme catalyses Hydrolysis of (1-&gt;4)-beta-linkages between N-acetylmuramic acid and N-acetyl-D-glucosamine residues in a peptidoglycan and between N-acetyl-D-glucosamine residues in chitodextrins.. In Bos taurus (Bovine), this protein is Sperm acrosome-associated protein 5 (SPACA5).